The chain runs to 70 residues: Ranatuerin-2SN1 (70 aa).

Positions 1 to 22 (MFTLKKSLLLIFFLGTISLSLC) are cleaved as a signal peptide. The propeptide at 23 to 40 (EKERDADDDEVEVIKQEE) is removed in mature form. C65 and C70 form a disulfide bridge.

Belongs to the frog skin active peptide (FSAP) family. Ranatuerin subfamily. In terms of tissue distribution, expressed by the skin glands.

The protein resides in the secreted. Antimicrobial peptide. Weakly active against P.faecalis X29. Not active against fungi. Shows very weak hemolytic activity against human erythrocytes. The sequence is that of Ranatuerin-2SN1 from Sylvirana spinulosa (Fine-spined frog).